Consider the following 310-residue polypeptide: M1-specific T cell receptor beta chain (310 aa).

A signal peptide spans 1 to 21 (MSNQVLCCVVLCLLGANTVDG). The interval 22 to 114 (GITQSPKYLF…TAFYLCASSI (93 aa)) is t cell receptor beta variable 19. Residues 34–131 (EGQNVTLSCE…FGPGTRLTVT (98 aa)) form the Ig-like V-type domain. Residue Asn-37 is glycosylated (N-linked (GlcNAc...) asparagine). Cys-42 and Cys-110 are oxidised to a cystine. Residues 46-50 (LNHDA) form a CDR1 region. Residue Asp-49 participates in a peptide antigen binding. Positions 68–73 (SQIVND) are CDR2. The CDR3 stretch occupies residues 110-122 (CASSIRSSYEQYF). The t cell receptor beta joining 2-7 stretch occupies residues 117-131 (SYEQYFGPGTRLTVT). The tract at residues 133 to 310 (DLKNVFPPKV…AMVKRKDSRG (178 aa)) is t cell receptor beta constant 2. Residues 140 to 249 (PKVAVFEPSE…WTQDRAKPVT (110 aa)) enclose the Ig-like C1-type domain. A disulfide bridge connects residues Cys-162 and Cys-227. Residue Asn-201 is glycosylated (N-linked (GlcNAc...) asparagine). Positions 262 to 276 (CGFTSESYQQGVLSA) are connecting peptide. Residues 277–299 (TILYEILLGKATLYAVLVSALVL) traverse the membrane as a helical segment. Over 300–310 (MAMVKRKDSRG) the chain is Cytoplasmic.

As to quaternary structure, disulfide-linked heterodimer with TRAV27*01J42*01C*01 alpha chain. The TR primarily interacts via its CDR3-beta domain with M/matrix protein 1-derived peptide (GILGFVFTL) displayed by HLA-A*02.01 in a 'peg-notch' recognition mode. The alpha-beta TR associates with the transmembrane signaling CD3 coreceptor proteins to form the TR-CD3 (TCR). The assembly of alpha-beta TR heterodimers with CD3 occurs in the endoplasmic reticulum where a single alpha-beta TR heterodimer associates with one CD3D-CD3E heterodimer, one CD3G-CD3E heterodimer and one CD247 homodimer forming a stable octameric structure. CD3D-CD3E and CD3G-CD3E heterodimers preferentially associate with TR alpha and TR beta chains (via TM domain), respectively. The association of the CD247 homodimer is the last step of TCR assembly in the endoplasmic reticulum and is required for transport to the cell surface. In terms of tissue distribution, expressed in M/matrix protein 1-specific effector memory CD8-positive T cells readily detectable in the peripheral blood, secondary lymphoid organs and lung (primary site of infection) of IAV infected individuals.

Its subcellular location is the cell membrane. Functionally, the beta chain of TRAV27*01J42*01C*01/TRBV19*01J2S7*01C*02 alpha-beta T cell receptor (TR) clonotype that is specific for HLA-A*02:01-restricted M/matrix protein 1 immunodominant epitope GILGFVFTL of influenza A virus (IAV). Classified as a public TCR clonotype, it is preferentially selected in effector memory CD8-positive T cells among multiple HLA-A*02:01 carriers/individuals and confers long-lived immunity against IAV infection. Can cross-recognize sporadically emerging IAV variants by molecular mimicry, inducing immunity toward different influenza strains. Antigen recognition initiates TR-CD3 clustering on the cell surface and intracellular activation of LCK that phosphorylates the ITAM motifs of CD3G, CD3D, CD3E and CD247 enabling the recruitment of ZAP70. In turn, ZAP70 phosphorylates LAT, which recruits numerous signaling molecules to form the LAT signalosome. The LAT signalosome propagates signal branching to three major signaling pathways, the calcium, the mitogen-activated protein kinase (MAPK) kinase and the nuclear factor NF-kappa-B (NF-kB) pathways, leading to the mobilization of transcription factors that are critical for gene expression and essential for T cell differentiation into effector/memory T cells. The polypeptide is M1-specific T cell receptor beta chain (Homo sapiens (Human)).